Consider the following 403-residue polypeptide: MSEQKKVVLAYSGGLDTSVAIKWLQEQGYNVIACCLDVGEGKDLAFVQQKALEVGATNSYVIDAKEEFAQDYALISLQAHTMYEGKYPLVSALSRPLIAKKLVEIAEKEDAQAIAHGCTGKGNDQVRFEVSIKSLNPDLEVIAPVREWQWSREEEIEYAASRGIPIPINLDSPYSIDQNLWGRANECGILEDPWAAPPEGAYDLTAPLEKTPDTPEVIEIAFEQGVPVSIDGVSYSLSELILKLNEMAGAHGVGRIDHVENRLVGIKSREVYECPGAMTLIKAHKELEDLTLVKEVAHFKPIIEQKMSEIIYNGLWFSPLKDALHAFLKETQKHVTGIVRVKLFKGHAIVEGRKSEYSLYDEKLATYTKDDAFDHHAAIGFIELWGLPTKVNSIVKKKEQIKA.

An ATP-binding site is contributed by 10–18; sequence AYSGGLDTS. Tyr-87 provides a ligand contact to L-citrulline. Gly-117 contributes to the ATP binding site. Thr-119, Asn-123, and Asp-124 together coordinate L-aspartate. Asn-123 serves as a coordination point for L-citrulline. L-citrulline is bound by residues Arg-127, Ser-175, Glu-260, and Tyr-272.

Belongs to the argininosuccinate synthase family. Type 1 subfamily. In terms of assembly, homotetramer.

It is found in the cytoplasm. It catalyses the reaction L-citrulline + L-aspartate + ATP = 2-(N(omega)-L-arginino)succinate + AMP + diphosphate + H(+). Its pathway is amino-acid biosynthesis; L-arginine biosynthesis; L-arginine from L-ornithine and carbamoyl phosphate: step 2/3. The chain is Argininosuccinate synthase from Bacillus subtilis (strain 168).